The sequence spans 795 residues: Toll-like receptor 6 (795 aa).

An N-terminal signal peptide occupies residues 1–27; it reads MSQDRKPIVGSFHFVCALALIVGSMTP. The Extracellular portion of the chain corresponds to 28 to 584; it reads FSNELESMVD…FHMSPLSCDT (557 aa). A glycan (N-linked (GlcNAc...) asparagine) is linked at asparagine 42. LRR repeat units follow at residues 54–77, 78–101, 102–125, 126–150, 151–175, 176–199, 200–223, 224–250, 251–278, 279–308, 309–337, 338–361, 362–388, 389–414, 415–437, 438–457, 458–478, 479–500, and 501–524; these read TKALSLSQNSISELRMPDISFLSE, LRVLRLSHNRIRSLDFHVFLFNQD, LEYLDVSHNRLQNISCCPMASLRH, LDLSFNDFDVLPVCKEFGNLTKLTF, LGLSAAKFRQLDLLPVAHLHLSCIL, LDLVSYHIKGGETESLQIPNTTVL, HLVFHPNSLFSVQVNMSVNALGHL, QLSNIKLNDENCQRLMTFLSELTRGPT, LLNVTLQHIETTWKCSVKLFQFFWPRPV, EYLNIYNLTITERIDREEFTYSETALKSLM, IEHVKNQVFLFSKEALYSVFAEMNIKMLS, ISDTPFIHMVCPPSPSSFTFLNFT, QNVFTDSVFQGCSTLKRLQTLILQRNG, LKNFFKVALMTKNMSSLETLDVSLNS, LNSHAYDRTCAWAESILVLNLSS, NMLTGSVFRCLPPKVKVLDL, HNNRIMSIPKDVTHLQALQEL, NVASNSLTDLPGCGAFSSLSVL, and VIDHNSVSHPSEDFFQSCQNIRSL. An N-linked (GlcNAc...) asparagine glycan is attached at asparagine 114. Cysteine 117 and cysteine 139 form a disulfide bridge. N-linked (GlcNAc...) asparagine glycosylation is present at asparagine 144. N-linked (GlcNAc...) asparagine glycans are attached at residues asparagine 195 and asparagine 214. Cysteines 235 and 265 form a disulfide. N-linked (GlcNAc...) asparagine glycosylation is found at asparagine 253 and asparagine 285. Cysteine 348 and cysteine 373 are oxidised to a cystine. Asparagine 359 carries N-linked (GlcNAc...) asparagine glycosylation. 2 N-linked (GlcNAc...) asparagine glycosylation sites follow: asparagine 401 and asparagine 434. Cysteine 424 and cysteine 447 form a disulfide bridge. Positions 525–576 constitute an LRRCT domain; that stretch reads TAGNNPFQCTCELRDFVKNIGWVAREVVEGWPDSYRCDYPESSKGTALRDFH. Residues 585–605 traverse the membrane as a helical segment; sequence VLLTVTIGATMLVLAVTGAFL. Residues 606 to 795 are Cytoplasmic-facing; that stretch reads CLYFDLPWYV…ALVNEDDVKT (190 aa). Residues 640–781 enclose the TIR domain; that stretch reads LQFHAFVSYS…LFWANLRASF (142 aa).

It belongs to the Toll-like receptor family. As to quaternary structure, homodimer (via cytoplasmic TIR domain). Heterodimer with TLR2 via their respective extracellular domains. Binds MYD88 via their respective TIR domains. Interacts with CD36, following CD36 stimulation by oxLDL or amyloid-beta 42, and forms a heterodimer with TLR4. The trimeric complex is internalized and triggers inflammatory response. LYN kinase activity facilitates TLR4:TLR6 heterodimerization and signal initiation. The heterodimer TLR2:TLR6 interacts with CD14 and CD36 in response to triacylated lipopeptides. In terms of tissue distribution, detected in thymus, spleen, ovary and lung. Expressed in macrohpages.

It is found in the cell membrane. The protein localises to the cytoplasmic vesicle. Its subcellular location is the phagosome membrane. It localises to the membrane raft. The protein resides in the golgi apparatus. Participates in the innate immune response to Gram-positive bacteria and fungi. Specifically recognizes diacylated and, to a lesser extent, triacylated lipopeptides. In response to diacylated lipopeptides, forms the activation cluster TLR2:TLR6:CD14:CD36, this cluster triggers signaling from the cell surface and subsequently is targeted to the Golgi in a lipid-raft dependent pathway. Acts via MYD88 and TRAF6, leading to NF-kappa-B activation, cytokine secretion and the inflammatory response. Recognizes mycoplasmal macrophage-activating lipopeptide-2kD (MALP-2), soluble tuberculosis factor (STF), phenol-soluble modulin (PSM) and B.burgdorferi outer surface protein A lipoprotein (OspA-L) cooperatively with TLR2. In complex with TLR4, promotes sterile inflammation in monocytes/macrophages in response to oxidized low-density lipoprotein (oxLDL) or amyloid-beta 42. In this context, the initial signal is provided by oxLDL- or amyloid-beta 42-binding to CD36. This event induces the formation of a heterodimer of TLR4 and TLR6, which is rapidly internalized and triggers inflammatory response, leading to the NF-kappa-B-dependent production of CXCL1, CXCL2 and CCL9 cytokines, via MYD88 signaling pathway, and CCL5 cytokine, via TICAM1 signaling pathway, as well as IL1B secretion. This chain is Toll-like receptor 6 (Tlr6), found in Mus musculus (Mouse).